The following is a 153-amino-acid chain: ATP synthase subunit b' (153 aa).

A helical membrane pass occupies residues 23 to 40; that stretch reads LMAIQVVALTYILNSLFF.

The protein belongs to the ATPase B chain family. As to quaternary structure, F-type ATPases have 2 components, F(1) - the catalytic core - and F(0) - the membrane proton channel. F(1) has five subunits: alpha(3), beta(3), gamma(1), delta(1), epsilon(1). F(0) has four main subunits: a(1), b(1), b'(1) and c(10-14). The alpha and beta chains form an alternating ring which encloses part of the gamma chain. F(1) is attached to F(0) by a central stalk formed by the gamma and epsilon chains, while a peripheral stalk is formed by the delta, b and b' chains.

The protein localises to the cellular thylakoid membrane. F(1)F(0) ATP synthase produces ATP from ADP in the presence of a proton or sodium gradient. F-type ATPases consist of two structural domains, F(1) containing the extramembraneous catalytic core and F(0) containing the membrane proton channel, linked together by a central stalk and a peripheral stalk. During catalysis, ATP synthesis in the catalytic domain of F(1) is coupled via a rotary mechanism of the central stalk subunits to proton translocation. Functionally, component of the F(0) channel, it forms part of the peripheral stalk, linking F(1) to F(0). The b'-subunit is a diverged and duplicated form of b found in plants and photosynthetic bacteria. The protein is ATP synthase subunit b' of Prochlorococcus marinus (strain MIT 9312).